Reading from the N-terminus, the 444-residue chain is Prenyltransferase phnF (444 aa).

The protein belongs to the tryptophan dimethylallyltransferase family.

The enzyme catalyses 2,3,4,7,9-pentahydroxy-6-methyl-1H-phenalen-1-one + dimethylallyl diphosphate = 2,4,7,9-tetrahydroxy-6-methyl-8-(2-methylbut-3-en-2-yl)-1-oxo-1H-phenalen-3-ol + diphosphate. Its pathway is secondary metabolite biosynthesis. Functionally, prenyltransferase; part of the gene cluster that mediates the biosynthesis of phenalenones such as herqueinone, compounds that have been reported to treat tumors, bacterial infections and/or mycoses, and rheumatic diseases. The non-reducing polyketide synthase phnA synthesizes the heptaketide backbone and cyclizes it into the angular, hemiketal-containing naphtho-gamma-pyrone prephenalenone. The product template (PT) domain of phnA catalyzes only the C4-C9 aldol condensation, which is unprecedented among known PT domains. The transformation of prephenalenone to phenalenones requires an FAD-dependent monooxygenase phnB, which catalyzes the C2 aromatic hydroxylation of prephenalenone and ring opening of the gamma-pyrone ring simultaneously. Subsequent intramolecular deprotonation of C3 phenolic oxygen accelerates phenalenone ring closure to yield the tricyclic phenalenone core with a C2 hydroxylation. The prenyltransferase phnF further catalyzes reverse C-prenylation of phenalenone by direct electrophilic substitution at C6, or possibly via first a forward O-prenylation of a neighboring phenol in phenalenone, followed by a Claisen rearrangement. The hydroalkoxylation enzyme phnH catalyzes the 5-exo-trig cyclization via acid catalysis after the spontaneous deprotonation of 7-OH, which leads to the formation of the dihydrobenzofuran atrovenetin. Atrovenetin is further converted to deoxyherqueinone by the O-methyltransferase phnC which can methylate C2-OH to stabilize the northern portion of the phenalenone core. Finally, the oxidoreductase phnG converts deoxyherqueinone to herqueinone via C6 hydroxylation. The chain is Prenyltransferase phnF from Penicillium herquei.